The following is a 132-amino-acid chain: uncharacterized protein (132 aa).

4 consecutive transmembrane segments (helical) span residues 6 to 26, 34 to 54, 59 to 79, and 106 to 126; these read WIYAVFTILIIGLGLGSRAFS, NTYLGDSLWAAMIFTGCGFLF, TMITGIISLSFCFVIEFSQLY, and IEAYTIGIAACAAIELLVLGI.

It is found in the cell membrane. This is an uncharacterized protein from Bacillus subtilis (strain 168).